Here is an 804-residue protein sequence, read N- to C-terminus: Lon protease 2 (804 aa).

A Lon N-terminal domain is found at 19-216 (VPILPLRNSV…LVLAMVGRQL (198 aa)). 367–374 (GPPGVGKT) contributes to the ATP binding site. The Lon proteolytic domain maps to 603–784 (TLQPGVATGL…EEILPLVLEP (182 aa)). Catalysis depends on residues Ser690 and Lys733. The tract at residues 782-804 (LEPPRRAPAQSASPEELEEQAGV) is disordered.

This sequence belongs to the peptidase S16 family. In terms of assembly, homohexamer. Organized in a ring with a central cavity.

The protein localises to the cytoplasm. The enzyme catalyses Hydrolysis of proteins in presence of ATP.. ATP-dependent serine protease that mediates the selective degradation of mutant and abnormal proteins as well as certain short-lived regulatory proteins. Required for cellular homeostasis and for survival from DNA damage and developmental changes induced by stress. Degrades polypeptides processively to yield small peptide fragments that are 5 to 10 amino acids long. Binds to DNA in a double-stranded, site-specific manner. In Sorangium cellulosum (strain So ce56) (Polyangium cellulosum (strain So ce56)), this protein is Lon protease 2.